The chain runs to 239 residues: 2-C-methyl-D-erythritol 4-phosphate cytidylyltransferase (239 aa).

The protein belongs to the IspD/TarI cytidylyltransferase family. IspD subfamily.

The enzyme catalyses 2-C-methyl-D-erythritol 4-phosphate + CTP + H(+) = 4-CDP-2-C-methyl-D-erythritol + diphosphate. Its pathway is isoprenoid biosynthesis; isopentenyl diphosphate biosynthesis via DXP pathway; isopentenyl diphosphate from 1-deoxy-D-xylulose 5-phosphate: step 2/6. Its function is as follows. Catalyzes the formation of 4-diphosphocytidyl-2-C-methyl-D-erythritol from CTP and 2-C-methyl-D-erythritol 4-phosphate (MEP). This is 2-C-methyl-D-erythritol 4-phosphate cytidylyltransferase from Acidobacterium capsulatum (strain ATCC 51196 / DSM 11244 / BCRC 80197 / JCM 7670 / NBRC 15755 / NCIMB 13165 / 161).